Reading from the N-terminus, the 142-residue chain is Large ribosomal subunit protein uL13 (142 aa).

The protein belongs to the universal ribosomal protein uL13 family. In terms of assembly, part of the 50S ribosomal subunit.

Functionally, this protein is one of the early assembly proteins of the 50S ribosomal subunit, although it is not seen to bind rRNA by itself. It is important during the early stages of 50S assembly. The sequence is that of Large ribosomal subunit protein uL13 from Histophilus somni (strain 2336) (Haemophilus somnus).